We begin with the raw amino-acid sequence, 148 residues long: Large ribosomal subunit protein uL15 (148 aa).

The segment at 1-47 (MAFSLENLRPAPGSRPKSKRVGRGSSSGKGKTSSRGHKGQGRGTGKV) is disordered.

It belongs to the universal ribosomal protein uL15 family. As to quaternary structure, part of the 50S ribosomal subunit.

Functionally, binds to the 23S rRNA. This is Large ribosomal subunit protein uL15 from Kosmotoga olearia (strain ATCC BAA-1733 / DSM 21960 / TBF 19.5.1).